The following is a 160-amino-acid chain: Transcription elongation factor GreA (160 aa).

Residues 1–72 (MAEKTYPMTL…QISSLETKIR (72 aa)) adopt a coiled-coil conformation.

Belongs to the GreA/GreB family.

In terms of biological role, necessary for efficient RNA polymerase transcription elongation past template-encoded arresting sites. The arresting sites in DNA have the property of trapping a certain fraction of elongating RNA polymerases that pass through, resulting in locked ternary complexes. Cleavage of the nascent transcript by cleavage factors such as GreA or GreB allows the resumption of elongation from the new 3'terminus. GreA releases sequences of 2 to 3 nucleotides. This Streptococcus pneumoniae (strain Hungary19A-6) protein is Transcription elongation factor GreA.